Consider the following 67-residue polypeptide: uncharacterized protein (67 aa).

The helical transmembrane segment at 19–39 (ISFIIFFFFYFFFFYFFYGFW) threads the bilayer.

Its subcellular location is the membrane. This is an uncharacterized protein from Dictyostelium discoideum (Social amoeba).